The primary structure comprises 880 residues: Phosphoinositide 3-kinase regulatory subunit 5 (880 aa).

M1 carries the N-acetylmethionine modification. The heterodimerization stretch occupies residues S25 to L101. 4 disordered regions span residues G315–H339, S389–R416, R454–E510, and H565–E601. The segment covering G318–E335 has biased composition (acidic residues). S458 and S507 each carry phosphoserine. Residues A571–D585 show a composition bias toward pro residues. The interaction with beta-gamma G protein dimers stretch occupies residues P653 to S753.

Heterodimer of a catalytic subunit (PIK3CG/p120) and a regulatory (PIK3R5a/p101) subunit. Interacts with beta-gamma G protein dimers. In terms of tissue distribution, ubiquitously expressed with high expression in fetal brain compared to adult brain. Abundant expression is observed in cerebellum, cerebral cortex, cerebral meninges, and vermis cerebelli.

Its subcellular location is the nucleus. It localises to the cytoplasm. It is found in the cell membrane. Its activity is regulated as follows. Greatly activated by G gamma proteins. Functionally, regulatory subunit of the PI3K gamma complex. Required for recruitment of the catalytic subunit to the plasma membrane via interaction with beta-gamma G protein dimers. Required for G protein-mediated activation of PIK3CG. This is Phosphoinositide 3-kinase regulatory subunit 5 (PIK3R5) from Homo sapiens (Human).